A 651-amino-acid polypeptide reads, in one-letter code: Probable potassium transport system protein Kup (651 aa).

12 helical membrane passes run 41 to 61 (LVLGALGVVYGDIGTSPIYAF), 82 to 102 (VVSLIFWALTLVVTVKYVLFV), 130 to 150 (LILGVGICGAALFFGDAVITP), 163 to 183 (IVAPNLTPFVVPATVVILVTL), 194 to 214 (VAIVFGPIMALWFVALGASGL), 235 to 255 (FLTVSPAVAFVTVGAVFLAMT), 276 to 296 (WLWIVFPCLLLNYFGQAAFIL), 309 to 329 (MIPSFALWPMVLLATAATVIA), 366 to 386 (IYIPRVNLLLGLAVVILVLGF), 395 to 415 (AYGIAVTGNMLVTTVLLYIVM), 426 to 446 (ALPIILGFLVIDMLFFSANII), and 450 to 470 (EGGWASIGIATVLVLIMWTWV).

It belongs to the HAK/KUP transporter (TC 2.A.72) family.

Its subcellular location is the cell inner membrane. The catalysed reaction is K(+)(in) + H(+)(in) = K(+)(out) + H(+)(out). Transport of potassium into the cell. Likely operates as a K(+):H(+) symporter. The chain is Probable potassium transport system protein Kup from Brucella melitensis biotype 1 (strain ATCC 23456 / CCUG 17765 / NCTC 10094 / 16M).